Consider the following 251-residue polypeptide: 2-amino-5-chloromuconate deaminase (251 aa).

As to quaternary structure, monomer.

The enzyme catalyses (2Z,4E)-2-aminomuconate + H2O = (2Z,4E)-2-hydroxyhexa-2,4-dienedioate + NH4(+). The protein operates within xenobiotic degradation; 4-chloronitrobenzene degradation. It functions in the pathway xenobiotic degradation; nitrobenzene degradation. With respect to regulation, cysteine residue modifying agents such as p-chloromercuribenzoate and the SH-binding metals Zn(2+), Ni(2+) and Cu(2+) completely inhibit deaminase activity, whereas Ca(2+), Mg(2+) and the histidine residue-modifying agent diethyl pyrocarbonate inhibit the activity by 23 to 50%. In terms of biological role, involved in the biodegradation of xenobiotic compounds, such as nitrobenzene and 4-chloronitrobenzene (4-CNB). CnbZ preferentially catalyzes the deamination of 2-amino-5-chloromuconate (2A5CM) to yield 2-hydroxy-5-chloromuconate (2H5CM). Also able to catalyze the deamination of 2-aminomuconate to yield 2-hydroxymuconate, which spontaneously converts into its keto form, 2-oxalocrotonate. This is 2-amino-5-chloromuconate deaminase from Comamonas testosteroni (Pseudomonas testosteroni).